Here is a 419-residue protein sequence, read N- to C-terminus: Aminoacyltransferase FemB (419 aa).

The protein belongs to the FemABX family. In terms of assembly, homodimer. Interacts with FemA.

The protein localises to the cytoplasm. It catalyses the reaction MurNAc-L-Ala-D-isoglutaminyl-L-Lys-(N(6)-tri-Gly)-D-Ala-D-Ala-diphospho-di-trans,octa-cis-undecaprenyl-GlcNAc + 2 glycyl-tRNA(Gly) = MurNAc-L-Ala-D-isoglutaminyl-L-Lys-(N(6)-penta-Gly)-D-Ala-D-Ala-diphospho-di-trans,octa-cis-undecaprenyl-GlcNAc + 2 tRNA(Gly) + 2 H(+). Functionally, catalyzes the formation of the pentaglycine interpeptide bridge, which is characteristic of the S.aureus peptidoglycan. Adds glycines 4 and 5 of the pentaglycine bridge, using glycyl-tRNA(Gly) as donor. Involved in resistance to methicillin. The polypeptide is Aminoacyltransferase FemB (femB) (Staphylococcus aureus (strain NCTC 8325 / PS 47)).